The following is a 360-amino-acid chain: Photosystem II protein D1 2 (360 aa).

The next 3 membrane-spanning stretches (helical) occupy residues 29–46, 118–133, and 142–156; these read YIGW…TAVT, HYMI…QWEY, and WICV…ATYS. His118 is a chlorophyll a binding site. Tyr126 provides a ligand contact to pheophytin a. [CaMn4O5] cluster is bound by residues Asp170 and Glu189. The chain crosses the membrane as a helical span at residues 197–218; that stretch reads FHMFGVAGVLGGSLFAAMHGSL. Residue His198 participates in chlorophyll a binding. A quinone is bound by residues His215 and 264–265; that span reads SF. His215 provides a ligand contact to Fe cation. His272 is a binding site for Fe cation. Residues 274–288 traverse the membrane as a helical segment; sequence FLGAWPVVCIWLTAM. Residues His332, Glu333, Asp342, and Ala344 each coordinate [CaMn4O5] cluster. The propeptide occupies 345-360; that stretch reads AGESAPVALTAPVING.

Belongs to the reaction center PufL/M/PsbA/D family. As to quaternary structure, PSII is composed of 1 copy each of membrane proteins PsbA, PsbB, PsbC, PsbD, PsbE, PsbF, PsbH, PsbI, PsbJ, PsbK, PsbL, PsbM, PsbT, PsbX, PsbY, PsbZ, Psb30/Ycf12, peripheral proteins PsbO, CyanoQ (PsbQ), PsbU, PsbV and a large number of cofactors. It forms dimeric complexes. The D1/D2 heterodimer binds P680, chlorophylls that are the primary electron donor of PSII, and subsequent electron acceptors. It shares a non-heme iron and each subunit binds pheophytin, quinone, additional chlorophylls, carotenoids and lipids. D1 provides most of the ligands for the Mn4-Ca-O5 cluster of the oxygen-evolving complex (OEC). There is also a Cl(-1) ion associated with D1 and D2, which is required for oxygen evolution. The PSII complex binds additional chlorophylls, carotenoids and specific lipids. is required as a cofactor. Post-translationally, tyr-161 forms a radical intermediate that is referred to as redox-active TyrZ, YZ or Y-Z. In terms of processing, C-terminally processed by CtpA; processing is essential to allow assembly of the oxygen-evolving complex and thus photosynthetic growth.

The protein resides in the cellular thylakoid membrane. It carries out the reaction 2 a plastoquinone + 4 hnu + 2 H2O = 2 a plastoquinol + O2. Its function is as follows. Photosystem II (PSII) is a light-driven water:plastoquinone oxidoreductase that uses light energy to abstract electrons from H(2)O, generating O(2) and a proton gradient subsequently used for ATP formation. It consists of a core antenna complex that captures photons, and an electron transfer chain that converts photonic excitation into a charge separation. The D1/D2 (PsbA/PsbD) reaction center heterodimer binds P680, the primary electron donor of PSII as well as several subsequent electron acceptors. The polypeptide is Photosystem II protein D1 2 (Acaryochloris marina (strain MBIC 11017)).